Reading from the N-terminus, the 340-residue chain is Branched-chain-amino-acid aminotransferase (340 aa).

Residue lysine 187 is modified to N6-(pyridoxal phosphate)lysine.

Belongs to the class-IV pyridoxal-phosphate-dependent aminotransferase family. It depends on pyridoxal 5'-phosphate as a cofactor.

It carries out the reaction L-leucine + 2-oxoglutarate = 4-methyl-2-oxopentanoate + L-glutamate. It catalyses the reaction L-isoleucine + 2-oxoglutarate = (S)-3-methyl-2-oxopentanoate + L-glutamate. The enzyme catalyses L-valine + 2-oxoglutarate = 3-methyl-2-oxobutanoate + L-glutamate. It functions in the pathway amino-acid biosynthesis; L-isoleucine biosynthesis; L-isoleucine from 2-oxobutanoate: step 4/4. It participates in amino-acid biosynthesis; L-leucine biosynthesis; L-leucine from 3-methyl-2-oxobutanoate: step 4/4. The protein operates within amino-acid biosynthesis; L-valine biosynthesis; L-valine from pyruvate: step 4/4. In terms of biological role, acts on leucine, isoleucine and valine. The protein is Branched-chain-amino-acid aminotransferase (ilvE) of Helicobacter pylori (strain J99 / ATCC 700824) (Campylobacter pylori J99).